Reading from the N-terminus, the 804-residue chain is Leucine--tRNA ligase (804 aa).

The 'HIGH' region motif lies at 39–50 (PYPSGKGLHVGH). The 'KMSKS' region signature appears at 573–577 (KMSKS). K576 contributes to the ATP binding site.

This sequence belongs to the class-I aminoacyl-tRNA synthetase family.

It is found in the cytoplasm. It catalyses the reaction tRNA(Leu) + L-leucine + ATP = L-leucyl-tRNA(Leu) + AMP + diphosphate. The protein is Leucine--tRNA ligase of Lactobacillus delbrueckii subsp. bulgaricus (strain ATCC 11842 / DSM 20081 / BCRC 10696 / JCM 1002 / NBRC 13953 / NCIMB 11778 / NCTC 12712 / WDCM 00102 / Lb 14).